The chain runs to 984 residues: Serine/threonine-protein kinase N2 (984 aa).

Position 21 is a phosphoserine (S21). One can recognise an REM-1 1 domain in the interval 33-109 (KLDFSDTMVQ…LQELNAHIVV (77 aa)). K77 bears the N6-acetyllysine mark. At S110 the chain carries Phosphoserine. Residues 114–133 (DITDCPRTPDTPNNDPRCST) are disordered. Phosphothreonine occurs at positions 121 and 124. REM-1 domains are found at residues 121 to 203 (TPDT…TNEL) and 204 to 284 (AFDN…EVPK). The segment covering 123–133 (DTPNNDPRCST) has biased composition (polar residues). S302, S306, S360, and S362 each carry phosphoserine. A disordered region spans residues 351–383 (ATSVALPGWSPSETRSSFMSRTSKSKSGSSRNL). A C2 domain is found at 353–473 (SVALPGWSPS…LYLEPQGTLF (121 aa)). The segment covering 364–381 (TRSSFMSRTSKSKSGSSR) has biased composition (low complexity). Positions 382–463 (NLLKTDDLSN…FLDNQRHGMC (82 aa)) are necessary to rescue apical junction formation. Phosphoserine occurs at positions 535, 583, and 620. The tract at residues 558 to 584 (ASDSTVTKLDFDLEPEPPPAPPRASSL) is disordered. Phosphothreonine is present on T628. The residue at position 631 (S631) is a Phosphoserine. The Protein kinase domain occupies 657 to 916 (FRCCAVLGRG…AEDVKKHPFF (260 aa)). ATP-binding positions include 663–671 (LGRGHFGKV) and K686. D782 acts as the Proton acceptor in catalysis. Phosphothreonine; by PDPK1 is present on T816. The interval 917 to 977 (RLIDWSALMD…EEEQEMFRDF (61 aa)) is necessary for the catalytic activity. In terms of domain architecture, AGC-kinase C-terminal spans 917-984 (RLIDWSALMD…RDFDYIADWC (68 aa)). A Phosphoserine modification is found at S952. At T958 the chain carries Phosphothreonine. The negatively regulates the responsiveness of the catalytic activity by cardiolipin and is required for optimal activation by the GTP-bound RhoA stretch occupies residues 978–984 (DYIADWC).

This sequence belongs to the protein kinase superfamily. AGC Ser/Thr protein kinase family. PKC subfamily. As to quaternary structure, interacts (via the REM repeats) with RHOA (GTP-bound form preferentially) and interacts (via the REM repeats) with RAC1 (GTP-bound form preferentially); the interactions induce its autophosphorylation. Interacts with RHOC. Interacts with NCK1 and NCK2. Interacts with NCK1 (via SH3 domains). Interacts with CD44. Interacts (via C-terminal kinase domain) with PDPK1; the interaction stimulates PDPK1 kinase activity. Interacts with MAP3K2; the interaction activates PRK2 kinase activity in a MAP3K2-independent kinase activity. Interacts (via C-terminal domain) with AKT1; the interaction occurs with the C-terminal cleavage product of PRK2 in apoptotic cells. Interacts (via C-terminus) with PTPN13 (via PDZ 3 domain). Interacts with CDK10. In terms of assembly, (Microbial infection) Interacts with HCV NS5B (via N-terminal finger domain). In terms of processing, autophosphorylated. Phosphorylated during mitosis. Phosphorylated by CDK10. Post-translationally, activated by limited proteolysis with trypsin. Proteolytically cleaved by caspase-3 during the induction of apoptotic cell death. Ubiquitous. Expressed in numerous tumor cell lines, especially in bladder tumor cells.

It is found in the cytoplasm. Its subcellular location is the nucleus. The protein localises to the membrane. It localises to the cell projection. The protein resides in the lamellipodium. It is found in the cytoskeleton. Its subcellular location is the cleavage furrow. The protein localises to the midbody. It localises to the cell junction. The catalysed reaction is L-seryl-[protein] + ATP = O-phospho-L-seryl-[protein] + ADP + H(+). The enzyme catalyses L-threonyl-[protein] + ATP = O-phospho-L-threonyl-[protein] + ADP + H(+). Kinase activity is activated upon binding to GTP-bound Rhoa/Rac1 GTPases. Activated by caspase-3 (CASP3) cleavage during apoptosis. Activated by lipids, particularly cardiolipin and to a lesser extent by other acidic phospholipids and unsaturated fatty acids. Two specific sites, Thr-816 (activation loop of the kinase domain) and Thr-958 (turn motif), need to be phosphorylated for its full activation. Its function is as follows. PKC-related serine/threonine-protein kinase and Rho/Rac effector protein that participates in specific signal transduction responses in the cell. Plays a role in the regulation of cell cycle progression, actin cytoskeleton assembly, cell migration, cell adhesion, tumor cell invasion and transcription activation signaling processes. Phosphorylates CTTN in hyaluronan-induced astrocytes and hence decreases CTTN ability to associate with filamentous actin. Phosphorylates HDAC5, therefore lead to impair HDAC5 import. Direct RhoA target required for the regulation of the maturation of primordial junctions into apical junction formation in bronchial epithelial cells. Required for G2/M phases of the cell cycle progression and abscission during cytokinesis in a ECT2-dependent manner. Stimulates FYN kinase activity that is required for establishment of skin cell-cell adhesion during keratinocytes differentiation. Regulates epithelial bladder cells speed and direction of movement during cell migration and tumor cell invasion. Inhibits Akt pro-survival-induced kinase activity. Mediates Rho protein-induced transcriptional activation via the c-fos serum response factor (SRF). Involved in the negative regulation of ciliogenesis. In terms of biological role, (Microbial infection) Phosphorylates HCV NS5B leading to stimulation of HCV RNA replication. The sequence is that of Serine/threonine-protein kinase N2 (PKN2) from Homo sapiens (Human).